A 546-amino-acid chain; its full sequence is Carboxylic ester hydrolase FVEG_12634 (546 aa).

A disordered region spans residues 72-91 (FTDGTKICPQPPSSNTPDPS). S214 functions as the Acyl-ester intermediate in the catalytic mechanism.

It belongs to the type-B carboxylesterase/lipase family.

It catalyses the reaction a carboxylic ester + H2O = an alcohol + a carboxylate + H(+). Carboxylic ester hydrolase; part of the Fusarium detoxification of benzoxazolinone cluster 2 (FDB2) involved in the degradation of benzoxazolinones produced by the host plant. Maize, wheat, and rye produce the 2 benzoxazinone phytoanticipins 2,4-dihy-droxy-7-methoxy-1,4-benzoxazin-3-one (DIMBOA) and 2,4-dihydroxy-1,4-benzoxazin-3-one (DIBOA) that, due to their inherent instability once released, spontaneously degrade to the more stable corresponding benzoxazolinones, 6-methoxy-2-benzoxazolinone (MBOA) and 2-benzoxazolinone (BOA), respectively. The first step in the detoxification of benzoxazolinones involves the hydrolysis of the cyclic ester bond of benzoxazolinones by the FDB1 cluster gamma-lactamase MBL1 to aminophenols. MBL1 is able to convert BOA into 2-aminophenol (2-AP), as well as MBOA into 5-methoxy-2-aminophenol (2-AMP). The FDB2 cluster N-malonyltransferase FDB2/NAT1 then metabolizes aminophenols via N-malonylation to non-toxic malonamic acids. FDB2/NAT1 converts 2-AP into N-(2-hydroxyphenyl) malonamic acid (HPMA) and 2-AMP into N-(2-hydroxy-4-methoxyphenyl) malonamic acid (HMPMA). The duplicated dienlactone hydrolases DLH1 and DLH2 may provide redundant function for hydrolyzing the lactone moiety in the BOA molecule. The roles of the amidases an other enzymes encoded by the 2 FDB clusters have not been identified so far. The chain is Carboxylic ester hydrolase FVEG_12634 from Gibberella moniliformis (strain M3125 / FGSC 7600) (Maize ear and stalk rot fungus).